The primary structure comprises 184 residues: C-phycoerythrin class 1 subunit beta (184 aa).

(2R,3E)-phycoerythrobilin-binding residues include C50 and C61. N72 bears the N4-methylasparagine mark. Positions 82 and 165 each coordinate (2R,3E)-phycoerythrobilin.

The protein belongs to the phycobiliprotein family. As to quaternary structure, heterodimer of an alpha and a beta chain. Post-translationally, contains three covalently linked phycoerythrobilin chromophores.

It localises to the cellular thylakoid membrane. In terms of biological role, light-harvesting photosynthetic bile pigment-protein from the phycobiliprotein complex. In Synechococcus sp. (strain WH8020), this protein is C-phycoerythrin class 1 subunit beta (cpeB).